A 131-amino-acid polypeptide reads, in one-letter code: Cruxhalorhodopsin-1 (131 aa).

The chain crosses the membrane as a helical span at residues 1–11 (PMILLALGLLA). The Cytoplasmic segment spans residues 12-14 (DTD). The helical transmembrane segment at 15 to 38 (IASLFTAITMDIGMCVTGLAAALI) threads the bilayer. The Extracellular portion of the chain corresponds to 39 to 41 (TSS). A helical membrane pass occupies residues 42 to 64 (HLLRWVFYGISCAFFVAVLYVLL). The Cytoplasmic segment spans residues 65 to 76 (VQWPADAEAAGT). The chain crosses the membrane as a helical span at residues 77–100 (SEIFGTLKILTVVLWLGYPILWAL). Residues 101–109 (GSEGVALLS) lie on the Extracellular side of the membrane. A helical membrane pass occupies residues 110-131 (VGVTSWGYSGLDILAKYVFAFI). Lys125 carries the post-translational modification N6-(retinylidene)lysine.

This sequence belongs to the archaeal/bacterial/fungal opsin family.

The protein resides in the cell membrane. In terms of biological role, light-driven chloride pump. This Haloarcula argentinensis protein is Cruxhalorhodopsin-1 (choP1).